The chain runs to 121 residues: Cell division protein FtsL (121 aa).

The Cytoplasmic portion of the chain corresponds to 1-34 (MISRVTEALSKVKGSIGSNERHALPGVIGDDLLR). The chain crosses the membrane as a helical span at residues 35–57 (FGKLPLCLFICIILTAVTVVTTA). Residues 58–121 (HHTRLLTAQR…PSQENIVVQK (64 aa)) are Periplasmic-facing.

This sequence belongs to the FtsL family. As to quaternary structure, part of a complex composed of FtsB, FtsL and FtsQ.

It localises to the cell inner membrane. Its function is as follows. Essential cell division protein. May link together the upstream cell division proteins, which are predominantly cytoplasmic, with the downstream cell division proteins, which are predominantly periplasmic. This is Cell division protein FtsL from Salmonella typhimurium (strain LT2 / SGSC1412 / ATCC 700720).